Consider the following 462-residue polypeptide: Glycine--tRNA ligase (462 aa).

Substrate contacts are provided by Arg100 and Glu174. Residues 206–208, 216–221, 290–291, and 334–337 each bind ATP; these read RNE, FRTREF, EL, and GADR. 221 to 225 is a binding site for substrate; it reads FEQME. 330–334 is a binding site for substrate; sequence EPSLG.

This sequence belongs to the class-II aminoacyl-tRNA synthetase family. Homodimer.

It localises to the cytoplasm. It carries out the reaction tRNA(Gly) + glycine + ATP = glycyl-tRNA(Gly) + AMP + diphosphate. Its function is as follows. Catalyzes the attachment of glycine to tRNA(Gly). In Acetivibrio thermocellus (strain ATCC 27405 / DSM 1237 / JCM 9322 / NBRC 103400 / NCIMB 10682 / NRRL B-4536 / VPI 7372) (Clostridium thermocellum), this protein is Glycine--tRNA ligase.